Here is a 2036-residue protein sequence, read N- to C-terminus: Ral GTPase-activating protein subunit alpha-1 (2036 aa).

2 disordered regions span residues 343 to 384 (LVSR…SSLC) and 476 to 497 (EEGEKREEENGTNTADHVRNSS). Basic and acidic residues predominate over residues 345–365 (SREESKNDNADKTDRTTEPEQ). Polar residues-rich tracts occupy residues 366 to 384 (SHSNTSTLTEREPSSSSLC) and 486 to 497 (GTNTADHVRNSS). Phosphoserine is present on residues Ser-711 and Ser-721. The interval 715 to 753 (SFSRGWSRDQPGQAPMRQRSATTTGSPGTEKARSIVRQK) is disordered. The residue at position 754 (Thr-754) is a Phosphothreonine. Phosphoserine is present on Ser-773. The residue at position 778 (Thr-778) is a Phosphothreonine. Phosphoserine is present on residues Ser-797, Ser-860, Ser-861, and Ser-864. 2 disordered regions span residues 849-910 (SGNA…SDSH) and 982-1009 (TITGSESASPVHSPLGSRSQTPSPSTLN). Residues 850-863 (GNASTMTRRGSSPG) show a composition bias toward polar residues. Low complexity predominate over residues 895–910 (SPASAGSSDLISSDSH). The span at 983–1009 (ITGSESASPVHSPLGSRSQTPSPSTLN) shows a compositional bias: polar residues. Residues Ser-986, Ser-990, Ser-994, and Ser-1000 each carry the phosphoserine modification. Position 1002 is a phosphothreonine (Thr-1002). A phosphoserine mark is found at Ser-1004 and Ser-1478. The segment at 1327-2035 (FTNKTVAHVA…PYHHLPSDAD (709 aa)) is minimal domain that binds to TCF3/E12. The stretch at 1716–1744 (KQENDVINAILKQHTEEKEFVEKHFNDLN) forms a coiled coil. One can recognise a Rap-GAP domain in the interval 1796-2004 (LRNLDSRQCR…EERARYLQTI (209 aa)).

Component of the heterodimeric RalGAP1 complex with RALGAPB. Heterodimerization is required for activity. Interacts with the HLH region of TCF3/isoform E12. In terms of tissue distribution, widely expressed.

The protein localises to the cytoplasm. It is found in the nucleus. In terms of biological role, catalytic subunit of the heterodimeric RalGAP1 complex which acts as a GTPase activator for the Ras-like small GTPases RALA and RALB. In Homo sapiens (Human), this protein is Ral GTPase-activating protein subunit alpha-1 (RALGAPA1).